A 433-amino-acid polypeptide reads, in one-letter code: GTPase Obg (433 aa).

Residues Met1–Leu159 enclose the Obg domain. The OBG-type G domain maps to Ala160–Gln329. Residues Gly166–Ser173, Phe191–Val195, Asp212–Gly215, Asn282–Asp285, and Ile310–Ala312 each bind GTP. The Mg(2+) site is built by Ser173 and Thr193. Positions Ala355–Asp433 constitute an OCT domain.

This sequence belongs to the TRAFAC class OBG-HflX-like GTPase superfamily. OBG GTPase family. In terms of assembly, monomer. Mg(2+) is required as a cofactor.

It is found in the cytoplasm. Functionally, an essential GTPase which binds GTP, GDP and possibly (p)ppGpp with moderate affinity, with high nucleotide exchange rates and a fairly low GTP hydrolysis rate. Plays a role in control of the cell cycle, stress response, ribosome biogenesis and in those bacteria that undergo differentiation, in morphogenesis control. The protein is GTPase Obg of Mycoplasma pneumoniae (strain ATCC 29342 / M129 / Subtype 1) (Mycoplasmoides pneumoniae).